The following is a 456-amino-acid chain: Bifunctional protein GlmU (456 aa).

The tract at residues 1–230 is pyrophosphorylase; the sequence is MDKRFAVVLA…FQETLGVNDR (230 aa). Residues 9 to 12, lysine 23, glutamine 73, and 78 to 79 each bind UDP-N-acetyl-alpha-D-glucosamine; these read LAAG and GT. A Mg(2+)-binding site is contributed by aspartate 103. 4 residues coordinate UDP-N-acetyl-alpha-D-glucosamine: glycine 140, glutamate 155, asparagine 170, and asparagine 228. Asparagine 228 is a binding site for Mg(2+). The tract at residues 231 to 251 is linker; sequence VALSQAEIYMKQRINKRHMQN. An N-acetyltransferase region spans residues 252 to 456; that stretch reads GVSLIDPDNT…EDYAENIHKK (205 aa). Positions 333 and 351 each coordinate UDP-N-acetyl-alpha-D-glucosamine. Histidine 363 serves as the catalytic Proton acceptor. Residues tyrosine 366 and asparagine 377 each coordinate UDP-N-acetyl-alpha-D-glucosamine. Acetyl-CoA-binding positions include 386–387, alanine 423, and arginine 440; that span reads NY.

This sequence in the N-terminal section; belongs to the N-acetylglucosamine-1-phosphate uridyltransferase family. The protein in the C-terminal section; belongs to the transferase hexapeptide repeat family. As to quaternary structure, homotrimer. Mg(2+) is required as a cofactor.

It is found in the cytoplasm. The enzyme catalyses alpha-D-glucosamine 1-phosphate + acetyl-CoA = N-acetyl-alpha-D-glucosamine 1-phosphate + CoA + H(+). It catalyses the reaction N-acetyl-alpha-D-glucosamine 1-phosphate + UTP + H(+) = UDP-N-acetyl-alpha-D-glucosamine + diphosphate. It participates in nucleotide-sugar biosynthesis; UDP-N-acetyl-alpha-D-glucosamine biosynthesis; N-acetyl-alpha-D-glucosamine 1-phosphate from alpha-D-glucosamine 6-phosphate (route II): step 2/2. Its pathway is nucleotide-sugar biosynthesis; UDP-N-acetyl-alpha-D-glucosamine biosynthesis; UDP-N-acetyl-alpha-D-glucosamine from N-acetyl-alpha-D-glucosamine 1-phosphate: step 1/1. The protein operates within bacterial outer membrane biogenesis; LPS lipid A biosynthesis. Its function is as follows. Catalyzes the last two sequential reactions in the de novo biosynthetic pathway for UDP-N-acetylglucosamine (UDP-GlcNAc). The C-terminal domain catalyzes the transfer of acetyl group from acetyl coenzyme A to glucosamine-1-phosphate (GlcN-1-P) to produce N-acetylglucosamine-1-phosphate (GlcNAc-1-P), which is converted into UDP-GlcNAc by the transfer of uridine 5-monophosphate (from uridine 5-triphosphate), a reaction catalyzed by the N-terminal domain. The polypeptide is Bifunctional protein GlmU (Bacillus licheniformis (strain ATCC 14580 / DSM 13 / JCM 2505 / CCUG 7422 / NBRC 12200 / NCIMB 9375 / NCTC 10341 / NRRL NRS-1264 / Gibson 46)).